A 387-amino-acid polypeptide reads, in one-letter code: GTPase Obg (387 aa).

The 159-residue stretch at 1–159 (MKFVDEAIIR…RSLKLELLLL (159 aa)) folds into the Obg domain. The OBG-type G domain occupies 160-333 (ADVGLLGMPN…LALKLLDFID (174 aa)). Residues 166 to 173 (GMPNAGKS), 191 to 195 (FTTLV), 213 to 216 (DIPG), 283 to 286 (NKAD), and 314 to 316 (SAY) contribute to the GTP site. The Mg(2+) site is built by Ser-173 and Thr-193.

Belongs to the TRAFAC class OBG-HflX-like GTPase superfamily. OBG GTPase family. Monomer. Requires Mg(2+) as cofactor.

The protein localises to the cytoplasm. Functionally, an essential GTPase which binds GTP, GDP and possibly (p)ppGpp with moderate affinity, with high nucleotide exchange rates and a fairly low GTP hydrolysis rate. Plays a role in control of the cell cycle, stress response, ribosome biogenesis and in those bacteria that undergo differentiation, in morphogenesis control. This chain is GTPase Obg, found in Shewanella pealeana (strain ATCC 700345 / ANG-SQ1).